The following is a 437-amino-acid chain: Pyrophosphate--fructose 6-phosphate 1-phosphotransferase (437 aa).

Gly-27 contributes to the diphosphate binding site. Asp-122 lines the Mg(2+) pocket. Substrate-binding positions include 147–149, 193–195, Glu-261, and 323–326; these read TID, MGR, and YELR. Asp-149 acts as the Proton acceptor in catalysis.

This sequence belongs to the phosphofructokinase type A (PFKA) family. PPi-dependent PFK group II subfamily. Clade 'Short' sub-subfamily. In terms of assembly, homotetramer. The cofactor is Mg(2+). It depends on Mn(2+) as a cofactor.

The protein resides in the cytoplasm. The enzyme catalyses beta-D-fructose 6-phosphate + diphosphate = beta-D-fructose 1,6-bisphosphate + phosphate + H(+). The protein operates within carbohydrate degradation; glycolysis; D-glyceraldehyde 3-phosphate and glycerone phosphate from D-glucose: step 3/4. Its activity is regulated as follows. Activated by AMP. Probably promotes oligomerization of the enzyme. Catalyzes the phosphorylation of D-fructose 6-phosphate, the first committing step of glycolysis. Uses inorganic phosphate (PPi) as phosphoryl donor instead of ATP like common ATP-dependent phosphofructokinases (ATP-PFKs), which renders the reaction reversible, and can thus function both in glycolysis and gluconeogenesis. Consistently, PPi-PFK can replace the enzymes of both the forward (ATP-PFK) and reverse (fructose-bisphosphatase (FBPase)) reactions. The protein is Pyrophosphate--fructose 6-phosphate 1-phosphotransferase of Naegleria fowleri (Brain eating amoeba).